An 84-amino-acid polypeptide reads, in one-letter code: Small ribosomal subunit protein uS17 (84 aa).

It belongs to the universal ribosomal protein uS17 family. In terms of assembly, part of the 30S ribosomal subunit.

Functionally, one of the primary rRNA binding proteins, it binds specifically to the 5'-end of 16S ribosomal RNA. The chain is Small ribosomal subunit protein uS17 from Clostridium acetobutylicum (strain ATCC 824 / DSM 792 / JCM 1419 / IAM 19013 / LMG 5710 / NBRC 13948 / NRRL B-527 / VKM B-1787 / 2291 / W).